Here is a 780-residue protein sequence, read N- to C-terminus: ATP-dependent 6-phosphofructokinase, liver type (780 aa).

N-acetylalanine is present on A2. The interval 2–390 (ASVDLEKLRT…NWNIYKLLSH (389 aa)) is N-terminal catalytic PFK domain 1. ATP is bound by residues G25, 88–89 (RC), and 118–121 (GDGS). D119 contributes to the Mg(2+) binding site. Residues 164–166 (SID), R201, 208–210 (MGR), E264, R292, and 298–301 (HVQR) each bind substrate. The active-site Proton acceptor is D166. S377 bears the Phosphoserine mark. An interdomain linker region spans residues 391 to 400 (QKISKEKTNF). Positions 401-780 (SLAILNVGAP…RRTLSIETGF (380 aa)) are C-terminal regulatory PFK domain 2. Beta-D-fructose 2,6-bisphosphate is bound by residues R470, 527 to 531 (TISNN), R565, 572 to 574 (MGG), and E628. An O-linked (GlcNAc) serine glycan is attached at S529. A Phosphotyrosine modification is found at Y640. Beta-D-fructose 2,6-bisphosphate is bound by residues R654, 660–663 (HLQQ), and R734. A Phosphoserine modification is found at S775.

The protein belongs to the phosphofructokinase type A (PFKA) family. ATP-dependent PFK group I subfamily. Eukaryotic two domain clade 'E' sub-subfamily. As to quaternary structure, homo- and heterotetramers. Phosphofructokinase (PFK) enzyme functions as a tetramer composed of different combinations of 3 types of subunits, called PFKM (M), PFKL (L) and PFKP (P). The composition of the PFK tetramer differs according to the tissue type it is present in. The kinetic and regulatory properties of the tetrameric enzyme are dependent on the subunit composition, hence can vary across tissues. It depends on Mg(2+) as a cofactor. GlcNAcylation at Ser-529 by OGT decreases enzyme activity, leading to redirect glucose flux through the oxidative pentose phosphate pathway. Glycosylation is stimulated by both hypoxia and glucose deprivation.

The protein localises to the cytoplasm. The enzyme catalyses beta-D-fructose 6-phosphate + ATP = beta-D-fructose 1,6-bisphosphate + ADP + H(+). The protein operates within carbohydrate degradation; glycolysis; D-glyceraldehyde 3-phosphate and glycerone phosphate from D-glucose: step 3/4. Allosterically activated by ADP, AMP, or fructose 2,6-bisphosphate, and allosterically inhibited by ATP or citrate. GlcNAcylation by OGT overcomes allosteric regulation. In terms of biological role, catalyzes the phosphorylation of D-fructose 6-phosphate to fructose 1,6-bisphosphate by ATP, the first committing step of glycolysis. Negatively regulates the phagocyte oxidative burst in response to bacterial infection by controlling cellular NADPH biosynthesis and NADPH oxidase-derived reactive oxygen species. Upon macrophage activation, drives the metabolic switch toward glycolysis, thus preventing glucose turnover that produces NADPH via pentose phosphate pathway. The chain is ATP-dependent 6-phosphofructokinase, liver type (PFKL) from Bos taurus (Bovine).